Reading from the N-terminus, the 115-residue chain is Large ribosomal subunit protein bL19 (115 aa).

Belongs to the bacterial ribosomal protein bL19 family.

In terms of biological role, this protein is located at the 30S-50S ribosomal subunit interface and may play a role in the structure and function of the aminoacyl-tRNA binding site. This is Large ribosomal subunit protein bL19 from Caldanaerobacter subterraneus subsp. tengcongensis (strain DSM 15242 / JCM 11007 / NBRC 100824 / MB4) (Thermoanaerobacter tengcongensis).